Here is a 506-residue protein sequence, read N- to C-terminus: Beta-glucosidase 9 (506 aa).

Positions 1–22 are cleaved as a signal peptide; that stretch reads MKHFSLLFIFLVILLATSYSDA. Residues Gln42, His139, and 184–185 each bind a beta-D-glucoside; that span reads NE. The active-site Proton donor is Glu185. An intrachain disulfide couples Cys204 to Cys212. N-linked (GlcNAc...) asparagine glycosylation is found at Asn211 and Asn216. Tyr328 lines the a beta-D-glucoside pocket. N-linked (GlcNAc...) asparagine glycosylation is present at Asn363. An a beta-D-glucoside-binding site is contributed by Glu396. Glu396 functions as the Nucleophile in the catalytic mechanism. N-linked (GlcNAc...) asparagine glycosylation is present at Asn429. The a beta-D-glucoside site is built by Trp439 and Phe455. Asn461, Asn483, and Asn499 each carry an N-linked (GlcNAc...) asparagine glycan.

This sequence belongs to the glycosyl hydrolase 1 family.

The catalysed reaction is Hydrolysis of terminal, non-reducing beta-D-glucosyl residues with release of beta-D-glucose.. This Arabidopsis thaliana (Mouse-ear cress) protein is Beta-glucosidase 9.